The following is a 204-amino-acid chain: Urease accessory protein UreG (204 aa).

12 to 19 (GPVGSGKT) is a GTP binding site.

This sequence belongs to the SIMIBI class G3E GTPase family. UreG subfamily. In terms of assembly, homodimer. UreD, UreF and UreG form a complex that acts as a GTP-hydrolysis-dependent molecular chaperone, activating the urease apoprotein by helping to assemble the nickel containing metallocenter of UreC. The UreE protein probably delivers the nickel.

It localises to the cytoplasm. Functionally, facilitates the functional incorporation of the urease nickel metallocenter. This process requires GTP hydrolysis, probably effectuated by UreG. The chain is Urease accessory protein UreG from Pseudomonas fluorescens (strain SBW25).